We begin with the raw amino-acid sequence, 90 residues long: Putative defensin-like protein 168 (90 aa).

Positions 1-27 are cleaved as a signal peptide; that stretch reads MKYFTLFMISYIFISIFVFSHIHDVEA. Disulfide bonds link Cys32–Cys90, Cys43–Cys66, Cys51–Cys84, and Cys64–Cys86.

The protein belongs to the DEFL family.

The protein localises to the secreted. In Arabidopsis thaliana (Mouse-ear cress), this protein is Putative defensin-like protein 168.